A 467-amino-acid polypeptide reads, in one-letter code: ATP synthase subunit beta (467 aa).

Residue 150–157 (GGAGVGKT) coordinates ATP.

Belongs to the ATPase alpha/beta chains family. In terms of assembly, F-type ATPases have 2 components, CF(1) - the catalytic core - and CF(0) - the membrane proton channel. CF(1) has five subunits: alpha(3), beta(3), gamma(1), delta(1), epsilon(1). CF(0) has three main subunits: a(1), b(2) and c(9-12). The alpha and beta chains form an alternating ring which encloses part of the gamma chain. CF(1) is attached to CF(0) by a central stalk formed by the gamma and epsilon chains, while a peripheral stalk is formed by the delta and b chains.

The protein localises to the cell inner membrane. It catalyses the reaction ATP + H2O + 4 H(+)(in) = ADP + phosphate + 5 H(+)(out). Produces ATP from ADP in the presence of a proton gradient across the membrane. The catalytic sites are hosted primarily by the beta subunits. This chain is ATP synthase subunit beta, found in Aliivibrio fischeri (strain ATCC 700601 / ES114) (Vibrio fischeri).